The primary structure comprises 230 residues: Orotidine 5'-phosphate decarboxylase (230 aa).

Substrate-binding positions include D10, K31, 58 to 67 (DLKLHDIPNT), T117, R179, Q188, G208, and R209. The active-site Proton donor is K60. The tract at residues 177 to 196 (GIRPKDASSDDQKRITTPED) is disordered. The span at 179 to 196 (RPKDASSDDQKRITTPED) shows a compositional bias: basic and acidic residues.

The protein belongs to the OMP decarboxylase family. Type 1 subfamily. In terms of assembly, homodimer.

It carries out the reaction orotidine 5'-phosphate + H(+) = UMP + CO2. It participates in pyrimidine metabolism; UMP biosynthesis via de novo pathway; UMP from orotate: step 2/2. Its function is as follows. Catalyzes the decarboxylation of orotidine 5'-monophosphate (OMP) to uridine 5'-monophosphate (UMP). The chain is Orotidine 5'-phosphate decarboxylase from Staphylococcus saprophyticus subsp. saprophyticus (strain ATCC 15305 / DSM 20229 / NCIMB 8711 / NCTC 7292 / S-41).